The primary structure comprises 706 residues: Integrator complex subunit 13 (706 aa).

Residues 564–603 (PPEEEERKKRGRKREDKEDKSEKAVKDYEQEKSWQDSERL) are disordered. Positions 567-622 (EEERKKRGRKREDKEDKSEKAVKDYEQEKSWQDSERLKGILERGKEELAEAEIIKD) form a coiled coil. The Nuclear localization signal (NLS) signature appears at 572–582 (KRGRKREDKED). Residue K611 forms a Glycyl lysine isopeptide (Lys-Gly) (interchain with G-Cter in SUMO2) linkage. The span at 615–636 (AEAEIIKDSPDSPEPPNKKPLV) shows a compositional bias: basic and acidic residues. The segment at 615 to 650 (AEAEIIKDSPDSPEPPNKKPLVEMDETPQVEKSKGP) is disordered. 3 positions are modified to phosphoserine: S623, S626, and S678. The tract at residues 649–694 (GPVSLLSLWSNRINTANSRKHQEFAGRLNSVNNRAELYQHLKEENG) is cleavage module binding motif (CMBM).

It belongs to the Integrator subunit 13 family. As to quaternary structure, component of the Integrator complex, composed of core subunits INTS1, INTS2, INTS3, INTS4, INTS5, INTS6, INTS7, INTS8, INTS9/RC74, INTS10, INTS11/CPSF3L, INTS12, INTS13, INTS14 and INTS15. The core complex associates with protein phosphatase 2A subunits PPP2CA and PPP2R1A, to form the Integrator-PP2A (INTAC) complex. INTS13 is part of the tail subcomplex, composed of INTS10, INTS13, INTS14 and INTS15. Interacts with transcription factors ZNF609 and ZNF655. Interacts with PAFAH1B1; this interaction may be required for proper recruitment of dynein complexes to the nuclear envelope at prophase. As to expression, widely expressed. Tends to be up-regulated in seminomas compared to normal testis.

It is found in the nucleus. It localises to the cytoplasm. Component of the integrator complex, a multiprotein complex that terminates RNA polymerase II (Pol II) transcription in the promoter-proximal region of genes. The integrator complex provides a quality checkpoint during transcription elongation by driving premature transcription termination of transcripts that are unfavorably configured for transcriptional elongation: the complex terminates transcription by (1) catalyzing dephosphorylation of the C-terminal domain (CTD) of Pol II subunit POLR2A/RPB1 and SUPT5H/SPT5, (2) degrading the exiting nascent RNA transcript via endonuclease activity and (3) promoting the release of Pol II from bound DNA. The integrator complex is also involved in terminating the synthesis of non-coding Pol II transcripts, such as enhancer RNAs (eRNAs), small nuclear RNAs (snRNAs), telomerase RNAs and long non-coding RNAs (lncRNAs). Within the integrator complex, INTS13 is part of the integrator tail module and acts as a platform for the recruitment of transcription factors at promoters. At prophase, mediates recruitment of cytoplasmic dynein to the nuclear envelope, a step important for proper centrosome-nucleus coupling. At G2/M phase, may be required for proper spindle formation and execution of cytokinesis. This Homo sapiens (Human) protein is Integrator complex subunit 13.